Reading from the N-terminus, the 319-residue chain is MTILAWCIAWVLDFIIGDPQHWPHPVRWIGRLITFVQRIVRRYCPGDKALRIGGGVMWVVVVGATWGVAWGVLALAQRIHPWFGWSVEVWMIFTTLAGRSLARAAQEVERPLRENDLAESRIKLSWIVGRDTSQLQPAQINRGVVETVAENTVDGIIAPLFFLFLGGAPLAMAYKAVNTLDSMVGYKHEKYRAIGMVSARMDDVANYLPARLSWLLLGIAAGLCRLSGWRALRIGWRDRYNHSSPNCAWSEACVAGALGIQLGGPNNYFGERVDKPWIGDAQRDISVDDISRTIRLMWVASTLALALFIAARCGLSGVA.

Helical transmembrane passes span 56–76 (VMWV…LALA), 82–102 (WFGW…RSLA), 153–173 (VDGI…LAMA), 204–224 (VANY…AGLC), and 296–316 (LMWV…CGLS).

This sequence belongs to the CobD/CbiB family.

The protein resides in the cell membrane. It functions in the pathway cofactor biosynthesis; adenosylcobalamin biosynthesis. Converts cobyric acid to cobinamide by the addition of aminopropanol on the F carboxylic group. However, the true cosubstrate could be (R)-1-amino-2-propanol O-2-phosphate, leading to cobinamide phosphate. The protein is Cobalamin biosynthesis protein CbiB of Salmonella paratyphi B (strain ATCC BAA-1250 / SPB7).